A 223-amino-acid chain; its full sequence is Coiled-coil domain-containing protein 124 (223 aa).

The disordered stretch occupies residues 1 to 126 (MPKKFQGENT…AEKAKSHLEV (126 aa)). The stretch at 15 to 82 (ARARRAEAKA…LLEEEDSKLK (68 aa)) forms a coiled coil. Composition is skewed to basic and acidic residues over residues 18 to 74 (RRAE…QRLL) and 99 to 126 (QIED…HLEV). Phosphoserine is present on residues Ser-141 and Ser-194. The tract at residues 204 to 223 (WLRSPDNPMNQRAVPFNAPK) is disordered.

This sequence belongs to the CCDC124 family. Associates with translationally inactive ribosomes in the nonrotated state. Interacts with RASGEF1B. As to expression, ubiquitously expressed.

It is found in the cytoplasm. The protein localises to the cytoskeleton. Its subcellular location is the microtubule organizing center. It localises to the centrosome. The protein resides in the midbody. Functionally, ribosome-binding protein involved in ribosome hibernation: associates with translationally inactive ribosomes and stabilizes the nonrotated conformation of the 80S ribosome, thereby promoting ribosome preservation and storage. Also required for proper progression of late cytokinetic stages. This is Coiled-coil domain-containing protein 124 from Homo sapiens (Human).